The chain runs to 397 residues: Mannan endo-1,4-beta-mannosidase 1 (397 aa).

Positions 1–23 (MSYARRSCICGLFLLFLALVCEA) are cleaved as a signal peptide. Tryptophan 83 and asparagine 198 together coordinate substrate. The active-site Proton donor is glutamate 199. Tyrosine 276 provides a ligand contact to substrate. Glutamate 316 acts as the Nucleophile in catalysis. Tryptophan 354 lines the substrate pocket.

It belongs to the glycosyl hydrolase 5 (cellulase A) family.

It is found in the secreted. The catalysed reaction is Random hydrolysis of (1-&gt;4)-beta-D-mannosidic linkages in mannans, galactomannans and glucomannans.. The protein is Mannan endo-1,4-beta-mannosidase 1 (MAN1) of Solanum lycopersicum (Tomato).